We begin with the raw amino-acid sequence, 468 residues long: MSASLTAEQKDQKSSVKRPLNSFMLYRRDRQAEIPTSNHQSISRIIGQLWRNESAQVKKYYSDLSALERQKHMLENPEYKYTPKKRSTVRRRHKKVSPSSGSFVASDYVVLQQIAQSSKTLKQTEPEKPVNEEETLAALLAPALSYPKSGKSNLIETSELSCLSSSPMIRSHTIPSLSFTDQVSTTISTLDKSEQAPSSLGIYYRSPSSGSPIGRTKSVCLANKARIVPKRSMSSDGCVDKSYQMSKTPSLEANLPQNSSNCSARRVPKFDSKGTVSEQSNSDSPELSADKVLSHCSPIDARPSTPSCPNASISPKTPNTGDHYGFDGAEYLGTPLSVGSTTAYLYGQETELLSTPYCHTSYPAMSRLNSSSGYTCVSSSSVTNSGHTENNTWRSDEQSKGFVDINSFSQSLFSNGNYEFAAHSQELDDLFSQITDFTSTDPIASSLKDANSLGPSLLEPWLPNSNLF.

A disordered region spans residues 1 to 21 (MSASLTAEQKDQKSSVKRPLN). A DNA-binding region (HMG box) is located at residues 16–80 (VKRPLNSFML…KHMLENPEYK (65 aa)). Position 173 is a phosphothreonine (Thr173). 3 positions are modified to phosphoserine: Ser209, Ser211, and Ser218. Polar residues-rich tracts occupy residues 249–263 (PSLE…SNCS) and 274–285 (GTVSEQSNSDSP). The segment at 249–290 (PSLEANLPQNSSNCSARRVPKFDSKGTVSEQSNSDSPELSAD) is disordered.

Phosphorylation results in inactivation.

The protein resides in the nucleus. It is found in the cytoplasm. Key transcription factor for sexual development. Activates the transcription of the matp, matm, mei2, mfm, ste6 and rgs1 genes. Binds specifically to a DNA fragment carrying a 10-base motif 5'-TTCTTTGTTY-3'. The polypeptide is Transcription factor ste11 (ste11) (Schizosaccharomyces pombe (strain 972 / ATCC 24843) (Fission yeast)).